We begin with the raw amino-acid sequence, 157 residues long: SsrA-binding protein (157 aa).

Residues 133 to 157 (LHDKRESEKKRDWGREKGRLLRARG) form a disordered region. A compositionally biased stretch (basic and acidic residues) spans 135 to 151 (DKRESEKKRDWGREKGR).

The protein belongs to the SmpB family.

It is found in the cytoplasm. Its function is as follows. Required for rescue of stalled ribosomes mediated by trans-translation. Binds to transfer-messenger RNA (tmRNA), required for stable association of tmRNA with ribosomes. tmRNA and SmpB together mimic tRNA shape, replacing the anticodon stem-loop with SmpB. tmRNA is encoded by the ssrA gene; the 2 termini fold to resemble tRNA(Ala) and it encodes a 'tag peptide', a short internal open reading frame. During trans-translation Ala-aminoacylated tmRNA acts like a tRNA, entering the A-site of stalled ribosomes, displacing the stalled mRNA. The ribosome then switches to translate the ORF on the tmRNA; the nascent peptide is terminated with the 'tag peptide' encoded by the tmRNA and targeted for degradation. The ribosome is freed to recommence translation, which seems to be the essential function of trans-translation. The protein is SsrA-binding protein of Bradyrhizobium sp. (strain ORS 278).